We begin with the raw amino-acid sequence, 403 residues long: MLKLLQQYEYKIIYKRMLYTCFILFIYILGTNISIVSYNDMQVKHESFFKIAISNMGGDVNTLNIFTLGLVPWLTSMIILMLISYRNMDKYMKQTSLEKHYKERILTLILSVIQSYFVIHEYVSKERVHQDNIYLTILILVTGTMLLVWLADKNSRYGIAGPMPIVMVSIIKSMMHQKMEYIDASHIVIALLIILVIITLFILLFIELVEVRIPYIDLMNVSATNMKSYLSWKVNPAGSITLMMSISAFVFLKSGIHFILSMFNKSISDDMPMLTFDSPVGISVYLVIQMLLGYFLSRFLINTKQKSKDFLKSGNYFSGVKPGKDTERYLNYQARRVCWFGSALVTVIIGIPLYFTLFVPHLSTEIYFSVQLIVLVYISINIAETIRTYLYFDKYKPFLNQYW.

10 consecutive transmembrane segments (helical) span residues 17 to 37, 63 to 83, 105 to 125, 131 to 151, 157 to 177, 186 to 206, 240 to 260, 276 to 296, 339 to 359, and 366 to 386; these read MLYTCFILFIYILGTNISIVS, LNIFTLGLVPWLTSMIILMLI, ILTLILSVIQSYFVIHEYVSK, DNIYLTILILVTGTMLLVWLA, YGIAGPMPIVMVSIIKSMMHQ, HIVIALLIILVIITLFILLFI, ITLMMSISAFVFLKSGIHFIL, FDSPVGISVYLVIQMLLGYFL, WFGSALVTVIIGIPLYFTLFV, and IYFSVQLIVLVYISINIAETI.

It belongs to the SecY/SEC61-alpha family. SecY2 subfamily. Component of the accessory SecA2/SecY2 protein translocase complex required to export cell wall proteins. May form heterotrimers with SecE and SecG subunits.

Its subcellular location is the cell membrane. Its function is as follows. Part of the accessory SecA2/SecY2 system specifically required for export of possible cell wall proteins. The central subunit of a protein translocation channel. In Staphylococcus aureus (strain N315), this protein is Accessory Sec system protein translocase subunit SecY2.